A 479-amino-acid chain; its full sequence is Ribosomal RNA small subunit methyltransferase F (479 aa).

Residues 125 to 131, Glu-149, Asp-176, and Asp-194 contribute to the S-adenosyl-L-methionine site; that span reads AAAPGSK. Cys-247 (nucleophile) is an active-site residue.

Belongs to the class I-like SAM-binding methyltransferase superfamily. RsmB/NOP family.

Its subcellular location is the cytoplasm. The enzyme catalyses cytidine(1407) in 16S rRNA + S-adenosyl-L-methionine = 5-methylcytidine(1407) in 16S rRNA + S-adenosyl-L-homocysteine + H(+). Its function is as follows. Specifically methylates the cytosine at position 1407 (m5C1407) of 16S rRNA. In Shigella sonnei (strain Ss046), this protein is Ribosomal RNA small subunit methyltransferase F.